We begin with the raw amino-acid sequence, 150 residues long: Large ribosomal subunit protein bL9 (150 aa).

It belongs to the bacterial ribosomal protein bL9 family.

In terms of biological role, binds to the 23S rRNA. The sequence is that of Large ribosomal subunit protein bL9 from Shewanella oneidensis (strain ATCC 700550 / JCM 31522 / CIP 106686 / LMG 19005 / NCIMB 14063 / MR-1).